Here is a 1322-residue protein sequence, read N- to C-terminus: Centrosome-associated protein Alms1a (1322 aa).

Disordered regions lie at residues Met1 to Arg26, Thr53 to Thr135, Ser165 to Lys193, Glu252 to Tyr442, Lys464 to Pro614, Glu657 to Asp752, Ser814 to Pro844, Ala856 to Arg911, and Ala1083 to Met1109. Positions Thr53–Thr62 are enriched in low complexity. Residues Met78–Arg111 are compositionally biased toward basic and acidic residues. The segment covering Ser165–Glu189 has biased composition (polar residues). The segment covering Ser279–Lys292 has biased composition (low complexity). Positions Glu309–Arg318 are enriched in polar residues. Residues Ser319–Ser330 show a composition bias toward low complexity. The segment covering Asn338 to Arg350 has biased composition (polar residues). The segment covering Glu354 to Ser364 has biased composition (acidic residues). Basic and acidic residues-rich tracts occupy residues Ile365–Ile375 and Ser394–Arg408. Residues Leu409 to Ser430 are compositionally biased toward low complexity. Composition is skewed to basic and acidic residues over residues Lys464–Gln487, Pro495–Gln512, and Arg519–Gln538. Composition is skewed to low complexity over residues Ser594 to Ser605 and Glu657 to Ser669. The span at Gly678–Ser696 shows a compositional bias: polar residues. Over residues Ala714–Gly735 the composition is skewed to low complexity. Polar residues-rich tracts occupy residues Val737–Thr751 and Thr822–Ser832. Positions Leu893–His907 are enriched in pro residues. Positions Ser1092–Ser1107 are enriched in low complexity. An interaction with Klp10A region spans residues Met1115–Met1322. The interval Ser1190–Ala1309 is ALMS motif.

This sequence belongs to the ALMS1 family. As to quaternary structure, interacts (via C-terminus) with Klp10A. Interacts with SAK. In terms of tissue distribution, expressed in all germlines, including germline stem cells and spermatogonia.

The protein localises to the cytoplasm. It is found in the cytoskeleton. It localises to the microtubule organizing center. The protein resides in the centrosome. Its subcellular location is the centriole. In terms of biological role, in asymmetrically dividing germline stem cells (GSCs), plays a critical role in ensuring centrosome duplication, which is essential for the production of centrosomes and centrioles in all downstream germ cells. Might recruit SAK for daughter centriole duplication. This chain is Centrosome-associated protein Alms1a, found in Drosophila melanogaster (Fruit fly).